Consider the following 410-residue polypeptide: Argininosuccinate synthase (410 aa).

10 to 18 serves as a coordination point for ATP; that stretch reads AYSGGLDTS. Positions 88 and 93 each coordinate L-citrulline. Glycine 118 is an ATP binding site. L-aspartate-binding residues include threonine 120, asparagine 124, and aspartate 125. Asparagine 124 is an L-citrulline binding site. Residues arginine 128, serine 177, serine 186, glutamate 262, and tyrosine 274 each coordinate L-citrulline.

It belongs to the argininosuccinate synthase family. Type 1 subfamily. In terms of assembly, homotetramer.

It localises to the cytoplasm. The enzyme catalyses L-citrulline + L-aspartate + ATP = 2-(N(omega)-L-arginino)succinate + AMP + diphosphate + H(+). It functions in the pathway amino-acid biosynthesis; L-arginine biosynthesis; L-arginine from L-ornithine and carbamoyl phosphate: step 2/3. This Thermoanaerobacter pseudethanolicus (strain ATCC 33223 / 39E) (Clostridium thermohydrosulfuricum) protein is Argininosuccinate synthase.